The following is a 426-amino-acid chain: Glutamate/glutamine/aspartate/asparagine transport system permease protein BztB (426 aa).

8 consecutive transmembrane segments (helical) span residues 25–45 (SITI…WLLN), 96–116 (LLVS…IGVL), 132–152 (VETF…TILA), 211–231 (LPVS…FWGW), 252–272 (WWPS…GLGF), 293–313 (SFTA…AEIV), 340–360 (SLVI…SQFL), and 396–416 (MLLM…LMNL). In terms of domain architecture, ABC transmembrane type-1 spans 92-414 (LLNTLLVSVL…TISLTISSLM (323 aa)).

Belongs to the binding-protein-dependent transport system permease family. HisMQ subfamily. In terms of assembly, bztB and BztC form a heterodimer which can form a membrane complex with a homodimer of BztD.

The protein localises to the cell inner membrane. In terms of biological role, part of a binding-protein-dependent transport system for glutamate, glutamine, aspartate and asparagine. Probably responsible for the translocation of the substrate across the membrane. The sequence is that of Glutamate/glutamine/aspartate/asparagine transport system permease protein BztB (bztB) from Rhodobacter capsulatus (strain ATCC BAA-309 / NBRC 16581 / SB1003).